The chain runs to 357 residues: Popeye domain-containing protein 1 (357 aa).

The Extracellular portion of the chain corresponds to 1–38 (MDTTAISPLTPLGVIPDLKNATSVPFNETACENWKEIH). 2 N-linked (GlcNAc...) asparagine glycosylation sites follow: asparagine 20 and asparagine 27. Residues 39–59 (HLVFHVANICFAAGLVIPTTL) form a helical membrane-spanning segment. The Cytoplasmic portion of the chain corresponds to 60 to 62 (NLH). A helical membrane pass occupies residues 63 to 83 (MIFLRGLLTVGCALFIIWATL). The Extracellular portion of the chain corresponds to 84–89 (YRCALD). Residues 90–110 (IMIWNSVFLVVNLLHFIYLVY) traverse the membrane as a helical segment. Over 111–357 (KRRPIKIEKE…AEKLELQRLP (247 aa)) the chain is Cytoplasmic. Positions 309-323 (GTSSSSSLRPGRTSP) are enriched in low complexity. A disordered region spans residues 309 to 357 (GTSSSSSLRPGRTSPYLRTSAKMKPIEESVEDDVFEAPSAEKLELQRLP). Residues 347-357 (SAEKLELQRLP) are compositionally biased toward basic and acidic residues.

It belongs to the popeye family. In terms of assembly, homodimer. Homodimerization requires the C-terminus cytoplasmic region. Expressed in the heart and skeletal muscle (at protein level). Isoform 1 and isoform 4: expressed in heart, muscle, brain, stomach, kidney, lung and spleen.

The protein localises to the lateral cell membrane. Its subcellular location is the cell junction. The protein resides in the tight junction. It is found in the membrane. It localises to the cell membrane. The protein localises to the sarcolemma. Its subcellular location is the caveola. In terms of biological role, cell adhesion molecule involved in the establishment and/or maintenance of cell integrity. Involved in the formation and regulation of the tight junction (TJ) paracellular permeability barrier in epithelial cells. Induces primordial adhesive contact and aggregation of epithelial cells in a Ca(2+)-independent manner. Involved in epithelial movement during corneal sheet formation and regeneration. May play a role in VAMP3-mediated vesicular transport and recycling of receptor molecules. May play a role in the regulation of cell shape and movement by modulating the Rho-GTPase activity. May be involved in skeletal muscle and heart development as well as in the maintenance of heart function. May also be involved in striated muscle regeneration and in the regulation of cell spreading. This is Popeye domain-containing protein 1 (POPDC1) from Gallus gallus (Chicken).